Reading from the N-terminus, the 30-residue chain is Cyclotide mden-I (30 aa).

A cross-link (cyclopeptide (Gly-Asn)) is located at residues 1 to 30; it reads GIPCGESCVYIPCITTAIGCSCKNKVCYRN. Cystine bridges form between cysteine 4–cysteine 20, cysteine 8–cysteine 22, and cysteine 13–cysteine 27.

It belongs to the cyclotide family. Bracelet subfamily. In terms of processing, this is a cyclic peptide.

Probably participates in a plant defense mechanism. The chain is Cyclotide mden-I from Melicytus dentatus (Tree violet).